The sequence spans 514 residues: Nuclear hormone receptor family member nhr-85 (514 aa).

Residues 28 to 48 (TSFSSPPATSSSSLLSPSPSS) form a disordered region. A DNA-binding region (nuclear receptor) is located at residues 110–186 (TILCQVCSDK…VGMSRDAVRF (77 aa)). 2 NR C4-type zinc fingers span residues 113 to 133 (CQVC…CEGC) and 150 to 174 (CTRA…LKKC). The region spanning 216–514 (QYENLTEVMH…VSPVPTTLSE (299 aa)) is the NR LBD domain. A disordered region spans residues 465-514 (ERPRRISSSGAQEPLNLSLPHVRHQVKRDVDSDEQLEEMKVSPVPTTLSE).

Belongs to the nuclear hormone receptor family.

It is found in the nucleus. Its function is as follows. Orphan nuclear receptor. The sequence is that of Nuclear hormone receptor family member nhr-85 (nhr-85) from Caenorhabditis elegans.